Here is a 279-residue protein sequence, read N- to C-terminus: tRNA pseudouridine synthase B (279 aa).

Asp38 acts as the Nucleophile in catalysis.

This sequence belongs to the pseudouridine synthase TruB family. Type 1 subfamily.

It catalyses the reaction uridine(55) in tRNA = pseudouridine(55) in tRNA. Functionally, responsible for synthesis of pseudouridine from uracil-55 in the psi GC loop of transfer RNAs. The protein is tRNA pseudouridine synthase B of Acholeplasma laidlawii (strain PG-8A).